The sequence spans 948 residues: Protocadherin alpha-10 (948 aa).

A signal peptide spans 1-28; sequence MVSRCSCLGVQCLLLSLLLLAAWEVGSG. 6 Cadherin domains span residues 29 to 132, 133 to 241, 242 to 349, 350 to 454, 455 to 564, and 587 to 689; these read QLHY…PPRF, SVTE…APIF, DRPV…SPEV, IVTS…APAF, AQPE…APAL, and GHVV…APEV. Over 29-695 the chain is Extracellular; it reads QLHYSVYEEA…APEVALVDVN (667 aa). Asn256 and Asn264 each carry an N-linked (GlcNAc...) asparagine glycan. The N-linked (GlcNAc...) asparagine glycan is linked to Asn547. Residues 696–716 form a helical membrane-spanning segment; it reads VYLIIAICAVSSLLVLTLLLY. Over 717-948 the chain is Cytoplasmic; the sequence is TALRCSAAPT…GNSTTDNSDQ (232 aa). 6 PXXP repeats span residues 732-735, 772-775, 797-800, 830-833, 871-874, and 889-892; these read PVKP, PSLP, PRQP, PGGP, PGNP, and PGSP. Residues 732–892 form a 6 X 4 AA repeats of P-X-X-P region; sequence PVKPTLVCSS…PDKFIIPGSP (161 aa). Disordered stretches follow at residues 783–804 and 827–948; these read DGEDQSIGGDHSRKPRQPNPDW and RAGP…NSDQ. Residues 907-921 are compositionally biased toward basic and acidic residues; it reads DKSDFITFGKKEETK.

It is found in the cell membrane. Its function is as follows. Potential calcium-dependent cell-adhesion protein. May be involved in the establishment and maintenance of specific neuronal connections in the brain. In Pan troglodytes (Chimpanzee), this protein is Protocadherin alpha-10 (PCDHA10).